Here is a 407-residue protein sequence, read N- to C-terminus: Fructose-1,6-bisphosphatase, chloroplastic (407 aa).

Residues 1-50 (MAAATASSQLIFSKPYSPSRLCPFQLCVFDAKSVLSSSRRKHVNGSGVRC) constitute a chloroplast transit peptide. Residues Glu126, Glu155, Asp176, Leu178, and Asp179 each coordinate Mg(2+). Substrate is bound at residue 179–182 (DGSS). Cys203 and Cys223 are disulfide-bonded. Residues Asn287, Tyr319, Tyr337, Tyr339, and Lys349 each contribute to the substrate site. Residue Glu355 coordinates Mg(2+).

The protein belongs to the FBPase class 1 family. Homotetramer. The cofactor is Mg(2+).

The protein resides in the plastid. Its subcellular location is the chloroplast stroma. The catalysed reaction is beta-D-fructose 1,6-bisphosphate + H2O = beta-D-fructose 6-phosphate + phosphate. Its pathway is carbohydrate biosynthesis; Calvin cycle. In Pisum sativum (Garden pea), this protein is Fructose-1,6-bisphosphatase, chloroplastic (FBP).